Here is a 53-residue protein sequence, read N- to C-terminus: Large ribosomal subunit protein eL40 (53 aa).

It belongs to the eukaryotic ribosomal protein eL40 family.

This is Large ribosomal subunit protein eL40 from Pyrobaculum arsenaticum (strain DSM 13514 / JCM 11321 / PZ6).